A 114-amino-acid chain; its full sequence is Large ribosomal subunit protein bL20 (114 aa).

It belongs to the bacterial ribosomal protein bL20 family.

In terms of biological role, binds directly to 23S ribosomal RNA and is necessary for the in vitro assembly process of the 50S ribosomal subunit. It is not involved in the protein synthesizing functions of that subunit. This is Large ribosomal subunit protein bL20 from Flavobacterium psychrophilum (strain ATCC 49511 / DSM 21280 / CIP 103535 / JIP02/86).